The following is a 460-amino-acid chain: Tyrosine phenol-lyase (460 aa).

Lysine 260 carries the post-translational modification N6-(pyridoxal phosphate)lysine.

This sequence belongs to the beta-eliminating lyase family. In terms of assembly, homotetramer. Pyridoxal 5'-phosphate is required as a cofactor.

It carries out the reaction L-tyrosine + H2O = phenol + pyruvate + NH4(+). This is Tyrosine phenol-lyase from Clostridium tetani (strain Massachusetts / E88).